A 22-amino-acid chain; its full sequence is Lantibiotic mutacin B-Ny266 (22 aa).

The lanthionine (Ser-Cys) cross-link spans 3–7; sequence SWSFC. 2,3-didehydroalanine (Ser) is present on Ser5. Residues 8–11 constitute a cross-link (beta-methyllanthionine (Thr-Cys)); it reads TPGC. The residue at position 14 (Thr14) is a 2,3-didehydrobutyrine. Residues 16 to 21 constitute a cross-link (lanthionine (Ser-Cys)); it reads SFNSYC. Residues 19–22 constitute a cross-link (S-(2-aminovinyl)-D-cysteine (Ser-Cys)); that stretch reads SYCC.

Post-translationally, maturation of lantibiotics involves the enzymatic conversion of Thr, and Ser into dehydrated AA and the formation of thioether bonds with cysteine. The C-terminal lanthionine undergoes decarboxylation. This is followed by membrane translocation and cleavage of the modified precursor. In terms of processing, it is not established whether the 2,3-didehydrobutyrine is the E- or Z-isomer.

Its function is as follows. Lanthionine-containing peptide antibiotic (lantibiotic) active on Gram-positive bacteria. The bactericidal activity of lantibiotics is based on depolarization of energized bacterial cytoplasmic membranes, initiated by the formation of aqueous transmembrane pores. This Streptococcus mutans protein is Lantibiotic mutacin B-Ny266.